Reading from the N-terminus, the 142-residue chain is Pre-mRNA-splicing factor cwf18 (142 aa).

Residues 24-45 (LENKTRDSQEVQKNVIEHRNYD) are compositionally biased toward basic and acidic residues. Residues 24 to 54 (LENKTRDSQEVQKNVIEHRNYDPEVQAPKMG) are disordered.

As to quaternary structure, belongs to the 40S cdc5-associated complex (or cwf complex), a spliceosome sub-complex reminiscent of a late-stage spliceosome composed of the U2, U5 and U6 snRNAs and at least brr2, cdc5, cwf2/prp3, cwf3/syf1, cwf4/syf3, cwf5/ecm2, spp42/cwf6, cwf7/spf27, cwf8, cwf9, cwf10, cwf11, cwf12, prp45/cwf13, cwf14, cwf15, cwf16, cwf17, cwf18, cwf19, cwf20, cwf21, cwf22, cwf23, cwf24, cwf25, cwf26, cyp7/cwf27, cwf28, cwf29/ist3, lea1, msl1, prp5/cwf1, prp10, prp12/sap130, prp17, prp22, sap61, sap62, sap114, sap145, slu7, smb1, smd1, smd3, smf1, smg1 and syf2.

Its subcellular location is the nucleus. Involved in mRNA splicing where it associates with cdc5 and the other cwf proteins as part of the spliceosome. The chain is Pre-mRNA-splicing factor cwf18 (cwf18) from Schizosaccharomyces pombe (strain 972 / ATCC 24843) (Fission yeast).